Consider the following 279-residue polypeptide: 4-hydroxy-3-methylbut-2-enyl diphosphate reductase (279 aa).

[4Fe-4S] cluster is bound at residue Cys12. 2 residues coordinate (2E)-4-hydroxy-3-methylbut-2-enyl diphosphate: His36 and His70. Dimethylallyl diphosphate is bound by residues His36 and His70. Isopentenyl diphosphate contacts are provided by His36 and His70. Cys92 provides a ligand contact to [4Fe-4S] cluster. His120 provides a ligand contact to (2E)-4-hydroxy-3-methylbut-2-enyl diphosphate. His120 contributes to the dimethylallyl diphosphate binding site. Isopentenyl diphosphate is bound at residue His120. Residue Glu122 is the Proton donor of the active site. Thr158 lines the (2E)-4-hydroxy-3-methylbut-2-enyl diphosphate pocket. Residue Cys186 participates in [4Fe-4S] cluster binding. The (2E)-4-hydroxy-3-methylbut-2-enyl diphosphate site is built by Ser214, Ser215, Asn216, and Ser258. Residues Ser214, Ser215, Asn216, and Ser258 each coordinate dimethylallyl diphosphate. Residues Ser214, Ser215, Asn216, and Ser258 each contribute to the isopentenyl diphosphate site.

It belongs to the IspH family. Requires [4Fe-4S] cluster as cofactor.

The catalysed reaction is isopentenyl diphosphate + 2 oxidized [2Fe-2S]-[ferredoxin] + H2O = (2E)-4-hydroxy-3-methylbut-2-enyl diphosphate + 2 reduced [2Fe-2S]-[ferredoxin] + 2 H(+). It carries out the reaction dimethylallyl diphosphate + 2 oxidized [2Fe-2S]-[ferredoxin] + H2O = (2E)-4-hydroxy-3-methylbut-2-enyl diphosphate + 2 reduced [2Fe-2S]-[ferredoxin] + 2 H(+). It participates in isoprenoid biosynthesis; dimethylallyl diphosphate biosynthesis; dimethylallyl diphosphate from (2E)-4-hydroxy-3-methylbutenyl diphosphate: step 1/1. It functions in the pathway isoprenoid biosynthesis; isopentenyl diphosphate biosynthesis via DXP pathway; isopentenyl diphosphate from 1-deoxy-D-xylulose 5-phosphate: step 6/6. Its function is as follows. Catalyzes the conversion of 1-hydroxy-2-methyl-2-(E)-butenyl 4-diphosphate (HMBPP) into a mixture of isopentenyl diphosphate (IPP) and dimethylallyl diphosphate (DMAPP). Acts in the terminal step of the DOXP/MEP pathway for isoprenoid precursor biosynthesis. This chain is 4-hydroxy-3-methylbut-2-enyl diphosphate reductase, found in Campylobacter fetus subsp. fetus (strain 82-40).